The chain runs to 229 residues: Flagellar calcium-binding protein TB-1.7G (229 aa).

Positions 1-25 (GSKNASNPKDGAASKGGKDGKTTAD) are disordered. Over residues 16-25 (GGKDGKTTAD) the composition is skewed to basic and acidic residues. EF-hand domains lie at 44 to 79 (ESKS…ILKL), 80 to 115 (DEFT…LVEF), 126 to 161 (YDIF…LKEW), and 163 to 198 (VDIT…KKLQ). Ca(2+) is bound by residues Asp-57, Asn-59, Thr-61, Lys-63, and Glu-68. Residues Asp-139, Asp-141, Ser-143, Glu-150, Asp-176, Asn-178, Ser-180, and Glu-187 each contribute to the Ca(2+) site. The segment at 202–229 (DPDDEENGANEGDGANAGDGVPAAEGSA) is disordered. Residues 210-221 (ANEGDGANAGDG) are compositionally biased toward low complexity.

This sequence belongs to the calflagin family.

It is found in the cell projection. The protein resides in the cilium. The protein localises to the flagellum. Functionally, may contribute to the rapid motility of the trypanosomes, playing a role either in flagellar structure or in calcium metabolism. Could alternate between a GDP-bound inactive form to a calcium/GTP-bound active form. This chain is Flagellar calcium-binding protein TB-1.7G, found in Trypanosoma brucei brucei.